Reading from the N-terminus, the 628-residue chain is Modular serine protease (628 aa).

The first 25 residues, M1 to A25, serve as a signal peptide directing secretion. LDL-receptor class A domains lie at A26–V64, H69–G107, N122–G163, and E166–N204. Intrachain disulfides connect C27–C39, C34–C52, C46–C63, C70–C82, C77–C95, C89–C106, C123–C135, C130–C149, C143–C162, C167–C179, C174–C192, and C186–C203. N36 carries N-linked (GlcNAc...) asparagine glycosylation. The N-linked (GlcNAc...) asparagine glycan is linked to N204. Sushi domains lie at L222 to K285 and A300 to Q356. Intrachain disulfides connect C224/C270, C256/C283, C302/C341, and C326/C354. The Peptidase S1 domain occupies S369–N621. Residue N376 is glycosylated (N-linked (GlcNAc...) asparagine). Residues C399 and C415 are joined by a disulfide bond. Catalysis depends on charge relay system residues H414, D472, and S563. The N-linked (GlcNAc...) asparagine glycan is linked to N621.

Belongs to the peptidase S1 family. In terms of processing, may be proteolytically cleaved via an autocatalytic mechanism.

It is found in the secreted. In terms of biological role, serine protease that plays a key role in innate immunity by activating the Toll pathway in response to infection with Gram-positive bacteria and fungi. During Gram-positive infection, acts downstream of PGRP-SA and upstream of Grass and Spz, and therefore appears to function in a pathway that links detection of Gram-positive lysine-type peptidoglycans to Toll activation. Functions in a separate pathway to the psh-mediated activation of the Toll pathway. This Drosophila melanogaster (Fruit fly) protein is Modular serine protease.